Consider the following 610-residue polypeptide: MTIKFLSESTINRIAAGEVIERPASVVKELVENAVDASSTKIDIILERAGKNLIIISDDGIGMTDKELEIAVERHTTSKFDESDFLNINTFGFRGEALPSIAAISKMLITSKKRDADKAFQIKLIGGNEKQVTISVHNEGTKIEIRDLFFATPARLKFLRADKTELAATVGVVKKIALAHPKISFSLTHDGKNLLKLKGQNKDAETNLKQRIIDVIGDDFIKNAAYIDFKTPDFSICGYTSSPTYNRASSEDQFLFINNRPVKDKLLQIALRVAYQDYLARDRYPICAIFLQINPQLVDVNVHPAKAEVRFHDPDYVRNLLIEAIKNALTNKSHVTSTTIASDALELFKNPLVNKQSPVSKVINVNSKSADYRPTTHSILNTVPQNHVCQKLIDTLSHAKIEQEVENRIEHEQQIRKQYKLGAAKAQLHTTYIISQTEDSIVITDQHAAHKRLGYEKIKDYLKTEELIKQRLLIPEIVELPNEKKADCLYDHREKLYKLGLTLEKFGEKSIIVTEIPNILGDVNVQKLIQDLADHLSDFGKNIALTELIEHVTETYACHYSIRAGRKLSADEMNALLRQMENTLLSGQCNHGRPTYIELKLKDIERLFGR.

Belongs to the DNA mismatch repair MutL/HexB family.

In terms of biological role, this protein is involved in the repair of mismatches in DNA. It is required for dam-dependent methyl-directed DNA mismatch repair. May act as a 'molecular matchmaker', a protein that promotes the formation of a stable complex between two or more DNA-binding proteins in an ATP-dependent manner without itself being part of a final effector complex. This Rickettsia rickettsii (strain Iowa) protein is DNA mismatch repair protein MutL.